A 316-amino-acid polypeptide reads, in one-letter code: Ribose-phosphate pyrophosphokinase (316 aa).

ATP contacts are provided by residues 40-42 (DGE) and 99-100 (RQ). Residues His133 and Asp174 each contribute to the Mg(2+) site. Residue Lys197 is part of the active site. Residues Arg199, Asp223, and 227-231 (DTAGT) contribute to the D-ribose 5-phosphate site.

This sequence belongs to the ribose-phosphate pyrophosphokinase family. Class I subfamily. Homohexamer. Mg(2+) is required as a cofactor.

It is found in the cytoplasm. It catalyses the reaction D-ribose 5-phosphate + ATP = 5-phospho-alpha-D-ribose 1-diphosphate + AMP + H(+). Its pathway is metabolic intermediate biosynthesis; 5-phospho-alpha-D-ribose 1-diphosphate biosynthesis; 5-phospho-alpha-D-ribose 1-diphosphate from D-ribose 5-phosphate (route I): step 1/1. In terms of biological role, involved in the biosynthesis of the central metabolite phospho-alpha-D-ribosyl-1-pyrophosphate (PRPP) via the transfer of pyrophosphoryl group from ATP to 1-hydroxyl of ribose-5-phosphate (Rib-5-P). The sequence is that of Ribose-phosphate pyrophosphokinase from Fusobacterium nucleatum subsp. nucleatum (strain ATCC 25586 / DSM 15643 / BCRC 10681 / CIP 101130 / JCM 8532 / KCTC 2640 / LMG 13131 / VPI 4355).